The following is a 1283-amino-acid chain: Oxysterol-binding protein homolog 2 (1283 aa).

At Ser2 the chain carries N-acetylserine. Phosphoserine is present on Ser7. ANK repeat units follow at residues 106 to 134 (NGNTPLHLAAAQSRSDVISFLLSQKSIND) and 206 to 235 (TGTTLLYEYSQKKDIEMCQWLLKHGAEATV). Positions 289–386 (PPTYKGFLKK…WVNAIQSAIR (98 aa)) constitute a PH domain. Ser422, Ser445, Ser451, Ser455, Ser458, Ser459, and Ser486 each carry phosphoserine. At Thr488 the chain carries Phosphothreonine. 2 stretches are compositionally biased toward polar residues: residues 504-518 (SNTLKSNRSMQSGSG) and 530-551 (ANLSQSNTTTGSTASLSDNNYI). 2 disordered regions span residues 504–571 (SNTL…LGIN) and 702–721 (TAGNKESLENDKEQESDTTA). Residues Ser512 and Ser515 each carry the phosphoserine modification. Residues 554-568 (FEGDEANSDDEEEDL) show a composition bias toward acidic residues. A compositionally biased stretch (basic and acidic residues) spans 707 to 716 (ESLENDKEQE). Phosphoserine is present on Ser717. Positions 745 to 751 (EFYDAAE) match the FFAT motif. The interval 767-834 (STAAAPKHAP…SLKNFKAEDK (68 aa)) is disordered. Thr783 is modified (phosphothreonine). At Ser787 the chain carries Phosphoserine. Composition is skewed to basic and acidic residues over residues 791–810 (QDEKSKIESNVEKTSQKFEK) and 818–834 (DEPKTDQSLKNFKAEDK). Phosphoserine is present on residues Ser825 and Ser1151. The interval 897–1268 (SLWAVLKSMV…KYWRYTGKYW (372 aa)) is OSBP-related domain (ORD).

Belongs to the OSBP family. In terms of assembly, interacts with SCS2.

The protein localises to the cell membrane. It is found in the endoplasmic reticulum membrane. In terms of biological role, lipid transport protein (LTP) involved in non-vesicular transfer of lipids between membranes. Functions in phosphoinositide-coupled directional transport of various lipids by carrying the lipid molecule in a hydrophobic pocket and transferring it between membranes through the cytosol. Involved in maintenance of intracellular sterol distribution and homeostasis. Binds and transports sterol. Plays a role in the positive regulation of vesicular transport of ceramide from the ER to the Golgi, negatively regulating COPII-mediated ER export of cargos. The chain is Oxysterol-binding protein homolog 2 from Saccharomyces cerevisiae (strain ATCC 204508 / S288c) (Baker's yeast).